Here is a 479-residue protein sequence, read N- to C-terminus: Outer membrane protein OprJ (479 aa).

Positions 1–19 (MRKPAFGVSALLIALTLGA) are cleaved as a signal peptide. Cys20 carries the N-palmitoyl cysteine lipid modification. The S-diacylglycerol cysteine moiety is linked to residue Cys20. A disordered region spans residues 102-121 (LNAAATGNRQRQPADLSAGN).

The protein belongs to the outer membrane factor (OMF) (TC 1.B.17) family.

The protein localises to the cell outer membrane. In terms of biological role, channel-forming component of a multidrug resistance efflux pump. In Pseudomonas aeruginosa (strain ATCC 15692 / DSM 22644 / CIP 104116 / JCM 14847 / LMG 12228 / 1C / PRS 101 / PAO1), this protein is Outer membrane protein OprJ (oprJ).